The chain runs to 512 residues: Inosine-5'-monophosphate dehydrogenase (512 aa).

CBS domains are found at residues 110–169 and 173–231; these read FIMK…SAPV and MTRR…PNSS. Residues 268 to 270 and 318 to 320 each bind NAD(+); these read DSS and GMG. K(+) is bound by residues G320 and G322. S323 is an IMP binding site. C325 contacts K(+). C325 (thioimidate intermediate) is an active-site residue. IMP contacts are provided by residues 358–360, 381–382, and 405–409; these read DGG, GS, and YRGMG. The active-site Proton acceptor is the R423. Residue Q435 participates in IMP binding. The K(+) site is built by E494 and G495. The Microbody targeting signal signature appears at 510–512; sequence SKL.

It belongs to the IMPDH/GMPR family. In terms of assembly, homotetramer. The cofactor is K(+).

The protein resides in the glycosome. It catalyses the reaction IMP + NAD(+) + H2O = XMP + NADH + H(+). Its pathway is purine metabolism; XMP biosynthesis via de novo pathway; XMP from IMP: step 1/1. With respect to regulation, mycophenolic acid (MPA) is a non-competitive inhibitor that prevents formation of the closed enzyme conformation by binding to the same site as the amobile flap. In contrast, mizoribine monophosphate (MZP) is a competitive inhibitor that induces the closed conformation. MPA is a potent inhibitor of mammalian IMPDHs but a poor inhibitor of the bacterial enzymes. MZP is a more potent inhibitor of bacterial IMPDH. Its function is as follows. Catalyzes the conversion of inosine 5'-phosphate (IMP) to xanthosine 5'-phosphate (XMP), the first committed and rate-limiting step in the de novo synthesis of guanine nucleotides, and therefore plays an important role in the regulation of cell growth. This chain is Inosine-5'-monophosphate dehydrogenase, found in Trypanosoma brucei brucei.